Here is a 142-residue protein sequence, read N- to C-terminus: Transcriptional regulator MraZ (142 aa).

SpoVT-AbrB domains lie at 5–51 and 77–120; these read ASSL…PRPE and AMDV…DKAS.

The protein belongs to the MraZ family. Forms oligomers.

The protein resides in the cytoplasm. Its subcellular location is the nucleoid. This Verminephrobacter eiseniae (strain EF01-2) protein is Transcriptional regulator MraZ.